The chain runs to 218 residues: MGNITAKLVKDLRDKTGAGMMDCKKALNETEGNLDKALEWLRKKGIASAEKKSGRVAAEGSIGSYIHTGSRVGVLLELNCETDFVARGDIFQSLLKDVSMQVAACPNVEYVSIDEIPEEVVEKEKQIEMGRDDLSGKPEQIKEKIVEGRIAKRLNELVLLSQPYIKDSSLTVEDLVKQAAAKIGENIKVRRFTRYTLGEGIEKNQIDFAEEVASMQTN.

An involved in Mg(2+) ion dislocation from EF-Tu region spans residues 82–85 (TDFV).

Belongs to the EF-Ts family.

Its subcellular location is the cytoplasm. Functionally, associates with the EF-Tu.GDP complex and induces the exchange of GDP to GTP. It remains bound to the aminoacyl-tRNA.EF-Tu.GTP complex up to the GTP hydrolysis stage on the ribosome. This chain is Elongation factor Ts, found in Prochlorococcus marinus (strain MIT 9301).